Reading from the N-terminus, the 167-residue chain is MSHIEKQAGELQEKLIAVNRVSKTVKGGRIFSFTALTVVGDGNGRVGFGYGKAREVPAAIQKAMEKARRAMINVALDNGTLQHPVKGAHTGSRVFMQPASEGTGIIAGGAMRAVLEVAGVHNVLAKAYGSTNPINVVRATIAALEDMKSPEMVAAKRGKSVEEILGK.

In terms of domain architecture, S5 DRBM spans 11-74; sequence LQEKLIAVNR…EKARRAMINV (64 aa).

Belongs to the universal ribosomal protein uS5 family. Part of the 30S ribosomal subunit. Contacts proteins S4 and S8.

Its function is as follows. With S4 and S12 plays an important role in translational accuracy. Functionally, located at the back of the 30S subunit body where it stabilizes the conformation of the head with respect to the body. The protein is Small ribosomal subunit protein uS5 of Yersinia enterocolitica serotype O:8 / biotype 1B (strain NCTC 13174 / 8081).